The primary structure comprises 499 residues: Glucose-6-phosphate exchanger SLC37A2 (499 aa).

Residues 21 to 40 traverse the membrane as a helical segment; it reads YRGFIIVMTFLFYTCYHLSR. Residues Asn53, Asn62, and Asn66 are each glycosylated (N-linked (GlcNAc...) asparagine). A run of 11 helical transmembrane segments spans residues 86–106, 116–136, 143–163, 187–207, 208–228, 302–322, 334–354, 362–382, 391–411, 434–454, and 458–478; these read GSLD…SGIF, LSGG…GYYW, YYIL…PAVV, AVGN…AWGL, SFIV…FFLV, LCLL…PLYI, GDLS…AGGI, AITC…YNYF, IAML…ITTA, AIID…AGVL, and GWNY…LLLA.

Belongs to the major facilitator superfamily. Organophosphate:Pi antiporter (OPA) (TC 2.A.1.4) family.

It is found in the endoplasmic reticulum membrane. It catalyses the reaction D-glucose 6-phosphate(in) + phosphate(out) = D-glucose 6-phosphate(out) + phosphate(in). Its function is as follows. Inorganic phosphate and glucose-6-phosphate antiporter. May transport cytoplasmic glucose-6-phosphate into the lumen of the endoplasmic reticulum and translocate inorganic phosphate into the opposite direction. The protein is Glucose-6-phosphate exchanger SLC37A2 of Xenopus laevis (African clawed frog).